Here is a 403-residue protein sequence, read N- to C-terminus: Phosphopentomutase (403 aa).

The Mn(2+) site is built by D13, D298, H303, D339, H340, and H351.

This sequence belongs to the phosphopentomutase family. Mn(2+) is required as a cofactor.

The protein localises to the cytoplasm. It catalyses the reaction 2-deoxy-alpha-D-ribose 1-phosphate = 2-deoxy-D-ribose 5-phosphate. The enzyme catalyses alpha-D-ribose 1-phosphate = D-ribose 5-phosphate. It functions in the pathway carbohydrate degradation; 2-deoxy-D-ribose 1-phosphate degradation; D-glyceraldehyde 3-phosphate and acetaldehyde from 2-deoxy-alpha-D-ribose 1-phosphate: step 1/2. Its function is as follows. Isomerase that catalyzes the conversion of deoxy-ribose 1-phosphate (dRib-1-P) and ribose 1-phosphate (Rib-1-P) to deoxy-ribose 5-phosphate (dRib-5-P) and ribose 5-phosphate (Rib-5-P), respectively. This is Phosphopentomutase from Streptococcus thermophilus (strain CNRZ 1066).